The chain runs to 521 residues: Ribonuclease Y (521 aa).

Residues 5-25 (LLLILTAVIMLIVGFAVGAIL) traverse the membrane as a helical segment. Residues 77-107 (ELKDRRGEVQKQENRLIQREETMDRKDATLD) form a disordered region. The region spanning 211 to 271 (TVTVVTLPND…IRREIARMTL (61 aa)) is the KH domain. The 94-residue stretch at 337 to 430 (VLNHSIEVAK…VAASDAISAA (94 aa)) folds into the HD domain.

The protein belongs to the RNase Y family.

The protein resides in the cell membrane. Functionally, endoribonuclease that initiates mRNA decay. This chain is Ribonuclease Y, found in Latilactobacillus sakei subsp. sakei (strain 23K) (Lactobacillus sakei subsp. sakei).